Reading from the N-terminus, the 217-residue chain is Small ribosomal subunit protein eS6 (217 aa).

The protein belongs to the eukaryotic ribosomal protein eS6 family. In terms of processing, phosphorylated.

The sequence is that of Small ribosomal subunit protein eS6 (RPS6) from Encephalitozoon cuniculi (strain GB-M1) (Microsporidian parasite).